A 565-amino-acid polypeptide reads, in one-letter code: Heme/hemopexin transporter protein HuxB (565 aa).

A signal peptide spans Met-1–Ala-26. One can recognise a POTRA domain in the interval Phe-73 to Gly-150.

This sequence belongs to the TPS (TC 1.B.20) family.

It is found in the cell outer membrane. Functionally, likely functions in the release of soluble HxuA from the cell. In terms of biological role, probable member of a two partner secretion pathway (TPS) in which it mediates the secretion of HuxA. This chain is Heme/hemopexin transporter protein HuxB (hxuB), found in Haemophilus influenzae (strain 86-028NP).